We begin with the raw amino-acid sequence, 222 residues long: Putative thymidylate synthase (222 aa).

Residue Cys-146 is part of the active site.

The protein belongs to the thymidylate synthase family. Archaeal-type ThyA subfamily. In terms of assembly, monomer.

It localises to the cytoplasm. Its pathway is pyrimidine metabolism; dTTP biosynthesis. Functionally, may catalyze the biosynthesis of dTMP using an unknown cosubstrate. In Methanothermobacter thermautotrophicus (strain ATCC 29096 / DSM 1053 / JCM 10044 / NBRC 100330 / Delta H) (Methanobacterium thermoautotrophicum), this protein is Putative thymidylate synthase.